Here is a 288-residue protein sequence, read N- to C-terminus: MASRDFLRVFGAGEGAGPPGDAGAGQPDDDELSLGLSLGGRFGTDAKRPRLARSSSIASVCSVSSLHADPSPAAPLPLLRTTSLPTETEEERWRRREMQSRRRLEARRKRVERRNSMGSVSVAPADAVSGRRSNASQGSNSASTTEQGIGGSMFNQSADAKSPSTSDNRNQNDMLPPTKAAEKPLNGTATEQQPRLRTLGSLTTRTGSTSDIRKLMMEDMPMVSSKVEGPNARRIDGFLYRYKKGEDVRIVCVCHGSFLTPAEFVKHAGGGDVPNPLRHIVVNPAPFS.

2 disordered regions span residues 1–50 (MASR…KRPR) and 66–207 (LHAD…TRTG). Positions 12–23 (AGEGAGPPGDAG) are enriched in gly residues. Low complexity predominate over residues 76 to 86 (LPLLRTTSLPT). Residues 91 to 103 (ERWRRREMQSRRR) show a composition bias toward basic and acidic residues. A compositionally biased stretch (polar residues) spans 131-173 (RRSNASQGSNSASTTEQGIGGSMFNQSADAKSPSTSDNRNQND). The segment covering 195–207 (RLRTLGSLTTRTG) has biased composition (low complexity).

It belongs to the Ninja family.

It is found in the nucleus. The polypeptide is Ninja-family protein 6 (Zea mays (Maize)).